The chain runs to 435 residues: Serine hydroxymethyltransferase (435 aa).

Residues Leu-133 and 137 to 139 (GHL) contribute to the (6S)-5,6,7,8-tetrahydrofolate site. An N6-(pyridoxal phosphate)lysine modification is found at Lys-242.

It belongs to the SHMT family. In terms of assembly, homodimer. Requires pyridoxal 5'-phosphate as cofactor.

Its subcellular location is the cytoplasm. The enzyme catalyses (6R)-5,10-methylene-5,6,7,8-tetrahydrofolate + glycine + H2O = (6S)-5,6,7,8-tetrahydrofolate + L-serine. It participates in one-carbon metabolism; tetrahydrofolate interconversion. It functions in the pathway amino-acid biosynthesis; glycine biosynthesis; glycine from L-serine: step 1/1. In terms of biological role, catalyzes the reversible interconversion of serine and glycine with tetrahydrofolate (THF) serving as the one-carbon carrier. This reaction serves as the major source of one-carbon groups required for the biosynthesis of purines, thymidylate, methionine, and other important biomolecules. Also exhibits THF-independent aldolase activity toward beta-hydroxyamino acids, producing glycine and aldehydes, via a retro-aldol mechanism. The sequence is that of Serine hydroxymethyltransferase from Hyphomonas neptunium (strain ATCC 15444).